A 944-amino-acid chain; its full sequence is Translation initiation factor IF-2 (944 aa).

A compositionally biased stretch (low complexity) spans 55–81 (LTGQAAAPAAAPSSAPRPGARSSAPKP). Residues 55-329 (LTGQAAAPAA…RTKRAEFELR (275 aa)) form a disordered region. The span at 82 to 92 (GGRPTPGPQPT) shows a compositional bias: pro residues. A compositionally biased stretch (low complexity) spans 93–107 (AAPEVEAPEASDVPV). Positions 123–135 (ASRKAAAEEKAQA) are enriched in basic and acidic residues. 2 stretches are compositionally biased toward low complexity: residues 136–153 (EKSA…ETPS) and 211–222 (GQRPAAGAAGPR). Over residues 223–236 (PAAPRPGSPRPGAP) the composition is skewed to pro residues. Over residues 244 to 257 (GARPAGFGQRPAGA) the composition is skewed to low complexity. The segment covering 258–269 (GRPGGAPGGAGR) has biased composition (gly residues). The segment covering 270-283 (PGAPAAGGFQRPAG) has biased composition (low complexity). The span at 284-310 (GFAGRPGGGGRGRGPGGGTAGAFGRGG) shows a compositional bias: gly residues. Over residues 311 to 322 (GKSKSRKSKRTK) the composition is skewed to basic residues. The 175-residue stretch at 437–611 (IRPPVVTVMG…LTADAGLDLR (175 aa)) folds into the tr-type G domain. The G1 stretch occupies residues 446–453 (GHVDHGKT). 446–453 (GHVDHGKT) serves as a coordination point for GTP. Residues 471-475 (GITQH) form a G2 region. The G3 stretch occupies residues 496-499 (DTPG). Residues 496 to 500 (DTPGH) and 550 to 553 (NKVD) contribute to the GTP site. The G4 stretch occupies residues 550 to 553 (NKVD). The G5 stretch occupies residues 586 to 588 (SAL).

The protein belongs to the TRAFAC class translation factor GTPase superfamily. Classic translation factor GTPase family. IF-2 subfamily.

It localises to the cytoplasm. In terms of biological role, one of the essential components for the initiation of protein synthesis. Protects formylmethionyl-tRNA from spontaneous hydrolysis and promotes its binding to the 30S ribosomal subunits. Also involved in the hydrolysis of GTP during the formation of the 70S ribosomal complex. The polypeptide is Translation initiation factor IF-2 (Clavibacter michiganensis subsp. michiganensis (strain NCPPB 382)).